A 435-amino-acid polypeptide reads, in one-letter code: ATP-dependent protease ATPase subunit HslU (435 aa).

ATP contacts are provided by residues Val-18, 60–65 (GCGKTE), Asp-248, Glu-313, and Arg-385.

It belongs to the ClpX chaperone family. HslU subfamily. In terms of assembly, a double ring-shaped homohexamer of HslV is capped on each side by a ring-shaped HslU homohexamer. The assembly of the HslU/HslV complex is dependent on binding of ATP.

It localises to the cytoplasm. Functionally, ATPase subunit of a proteasome-like degradation complex; this subunit has chaperone activity. The binding of ATP and its subsequent hydrolysis by HslU are essential for unfolding of protein substrates subsequently hydrolyzed by HslV. HslU recognizes the N-terminal part of its protein substrates and unfolds these before they are guided to HslV for hydrolysis. This chain is ATP-dependent protease ATPase subunit HslU, found in Beijerinckia indica subsp. indica (strain ATCC 9039 / DSM 1715 / NCIMB 8712).